Consider the following 346-residue polypeptide: Methionine import ATP-binding protein MetN 1 (346 aa).

The 240-residue stretch at 2 to 241 folds into the ABC transporter domain; that stretch reads IELKNVSKVF…PQHVTTKKFV (240 aa). 38–45 contributes to the ATP binding site; sequence GYSGAGKS.

This sequence belongs to the ABC transporter superfamily. Methionine importer (TC 3.A.1.24) family. The complex is composed of two ATP-binding proteins (MetN), two transmembrane proteins (MetI) and a solute-binding protein (MetQ).

It localises to the cell membrane. The enzyme catalyses L-methionine(out) + ATP + H2O = L-methionine(in) + ADP + phosphate + H(+). The catalysed reaction is D-methionine(out) + ATP + H2O = D-methionine(in) + ADP + phosphate + H(+). In terms of biological role, part of the ABC transporter complex MetNIQ involved in methionine import. Responsible for energy coupling to the transport system. The protein is Methionine import ATP-binding protein MetN 1 of Bacillus cereus (strain ATCC 14579 / DSM 31 / CCUG 7414 / JCM 2152 / NBRC 15305 / NCIMB 9373 / NCTC 2599 / NRRL B-3711).